Consider the following 257-residue polypeptide: Tryptophan synthase alpha chain (257 aa).

Catalysis depends on proton acceptor residues glutamate 44 and aspartate 55.

Belongs to the TrpA family. In terms of assembly, tetramer of two alpha and two beta chains.

The enzyme catalyses (1S,2R)-1-C-(indol-3-yl)glycerol 3-phosphate + L-serine = D-glyceraldehyde 3-phosphate + L-tryptophan + H2O. It participates in amino-acid biosynthesis; L-tryptophan biosynthesis; L-tryptophan from chorismate: step 5/5. Its function is as follows. The alpha subunit is responsible for the aldol cleavage of indoleglycerol phosphate to indole and glyceraldehyde 3-phosphate. This is Tryptophan synthase alpha chain from Chlamydia caviae (strain ATCC VR-813 / DSM 19441 / 03DC25 / GPIC) (Chlamydophila caviae).